The chain runs to 572 residues: Cuticlin-6 (572 aa).

The first 24 residues, 1 to 24, serve as a signal peptide directing secretion; it reads MRPIPYDISLSITSFLSLILICSA. The Extracellular segment spans residues 25 to 541; the sequence is NPIDNGLVDS…PLPYPLINTN (517 aa). Positions 47–216 constitute a VWFA domain; it reads EVILLLDASG…QLDRALADSL (170 aa). The N-linked (GlcNAc...) asparagine glycan is linked to asparagine 78. Residues 233 to 479 form the ZP domain; sequence ICGPDRIGVK…GGCEGITPPQ (247 aa). A helical membrane pass occupies residues 542–562; the sequence is LWIMGIITLTNIFVFILTVWF. Residues 563-572 are Cytoplasmic-facing; that stretch reads TFRKRRCKPA.

Its subcellular location is the cell membrane. Functionally, plays a role in alae formation in dauer larvae probably by regulating cuticle assembly. The sequence is that of Cuticlin-6 from Caenorhabditis elegans.